A 727-amino-acid chain; its full sequence is Cyclin-T1 (727 aa).

Ser-117 carries the post-translational modification Phosphoserine. The short motif at 253 to 270 (KRIWNWRAWQADRKTKAD) is the Nuclear localization signal element. Lys-343 is covalently cross-linked (Glycyl lysine isopeptide (Lys-Gly) (interchain with G-Cter in SUMO2)). Ser-389 carries the post-translational modification Phosphoserine. Residues 389-420 (SLKEYRAKHAEELAAQKRQLENMEANVKSQYA) adopt a coiled-coil conformation. Lys-391 bears the N6-acetyllysine mark. Lys-416 participates in a covalent cross-link: Glycyl lysine isopeptide (Lys-Gly) (interchain with G-Cter in SUMO2). ADP-ribosylserine is present on residues Ser-417 and Ser-475. Residues 481–551 (IKMRIKVHTA…RLGDPKHSSQ (71 aa)) are histidine-rich domain (HRD). A Glycyl lysine isopeptide (Lys-Gly) (interchain with G-Cter in SUMO2) cross-link involves residue Lys-482. The residue at position 486 (Lys-486) is an N6-(ADP-ribosyl)lysine. Residues 487-507 (VHTAADKHNSVDDSVTKNREH) are compositionally biased toward basic and acidic residues. Disordered stretches follow at residues 487–631 (VHTA…QPSC) and 691–727 (YMNPRAGGMSSRSGNTDKPRPPPLPSEPPPPLPPLPK). The residue at position 488 (His-488) is an ADP-ribosylhistidine. Phosphoserine occurs at positions 496 and 500. Over residues 508-531 (KEKHKTHPSNHHHHHNHHSHKHSH) the composition is skewed to basic residues. Residue His-531 is modified to ADP-ribosylhistidine. 3 positions are modified to ADP-ribosylserine: Ser-532, Ser-550, and Ser-553. His-557 is modified (ADP-ribosylhistidine). Residues 561–571 (SLSSSFSSSSS) show a composition bias toward low complexity. Ser-564 carries the post-translational modification ADP-ribosylserine. Ser-565 carries the post-translational modification Phosphoserine. Residues 616 to 631 (GHSSDTSGLHFSQPSC) show a composition bias toward polar residues. A compositionally biased stretch (pro residues) spans 711-727 (PPPLPSEPPPPLPPLPK).

It belongs to the cyclin family. Cyclin C subfamily. Cyclin-T1 is the predominant cyclin that associates with CDK9 to form a heterodimer called P-TEFb. P-TEFb forms a complex with AFF4/AF5Q31. Component of a complex which is at least composed of HTATSF1/Tat-SF1, P-TEFb complex, RNA pol II, SUPT5H, and NCL/nucleolin. Component of the 7SK snRNP complex at least composed of P-TEFb (composed of CDK9 and CCNT1/cyclin-T1), HEXIM1, HEXIM2, BCDIN3, SART3 proteins and 7SK and U6 snRNAs. Interacts (via central region) with ZMYND8 (via N-terminus); the interaction is direct and the association appears to occur between homodimeric ZMYND8 and the activated form of the P-TEFb complex. Interacts with BRD4, targets chromatin binding. Interacts with JMJD6. Interacts with MDFIC. Interacts with HSF1. Interacts with HTATSF1. Interacts with TBX21. In terms of assembly, (Microbial infection) Binds to BIV Tat, however Tat binds TAR RNA in a Cyc-T1-independent mode. In terms of processing, ADP-ribosylation on serine residues by PARP1 in response to DNA damage disrupts the phase separation activity of CCNT1, thereby preventing activation of CDK9.

Its subcellular location is the nucleus. Regulatory subunit of the cyclin-dependent kinase pair (CDK9/cyclin-T1) complex, also called positive transcription elongation factor B (P-TEFb), which facilitates the transition from abortive to productive elongation by phosphorylating the CTD (C-terminal domain) of the large subunit of RNA polymerase II (RNA Pol II). Required to activate the protein kinase activity of CDK9: acts by mediating formation of liquid-liquid phase separation (LLPS) that enhances binding of P-TEFb to the CTD of RNA Pol II. This chain is Cyclin-T1 (CCNT1), found in Bos taurus (Bovine).